The chain runs to 329 residues: Deoxynucleotidyltransferase terminal-interacting protein 1 (329 aa).

Disordered stretches follow at residues 1–22 and 147–178; these read MGAT…GGLE and KRGR…ILSS. The important for dimerization stretch occupies residues 56–147; the sequence is MTTSFTDPAI…RLTHELPGIK (92 aa). A compositionally biased stretch (basic and acidic residues) spans 147–158; the sequence is KRGRQAEEECAH. A DNA-binding region (a.T hook) is located at residues 159 to 173; the sequence is RGSPLPKKRKGRPPG. S161 is subject to Phosphoserine. A Nuclear localization signal motif is present at residues 164–170; sequence PKKRKGR. The interval 197–316 is important for DNA and nucleosome binding; that stretch reads REGPKWDPAR…MRKYMETLRT (120 aa). A DNA-binding region (H-T-H motif) is located at residues 216 to 237; it reads GSRANKALGMGGTRGRIYIKHP.

As to quaternary structure, monomer and homodimer. A minor proportion may form homotrimers. Interacts with ZNF541. Interacts with the terminal deoxynucleotidyltransferase DNTT. Interacts with TRERF1. Identified in a histone deacetylase complex that contains DNTTIP1, HDAC1 and MIDEAS; this complex assembles into a tetramer that contains four copies of each protein chain. Component of a histone deacetylase complex containing DNTTIP1, ZNF541, HDAC1 and HDAC2. Identified in a complex with KCTD19, HDAC1, HDAC2 and ZNF541.

The protein localises to the nucleus. Increases DNTT terminal deoxynucleotidyltransferase activity (in vitro). Also acts as a transcriptional regulator, binding to the consensus sequence 5'-GNTGCATG-3' following an AT-tract. Associates with RAB20 promoter and positively regulates its transcription. Binds DNA and nucleosomes; may recruit HDAC1 complexes to nucleosomes or naked DNA. The chain is Deoxynucleotidyltransferase terminal-interacting protein 1 (DNTTIP1) from Pongo abelii (Sumatran orangutan).